Here is a 161-residue protein sequence, read N- to C-terminus: Transcriptional regulator MraZ (161 aa).

SpoVT-AbrB domains are found at residues 7–69 (KELH…EPDV) and 98–141 (LDVV…EPER).

This sequence belongs to the MraZ family. As to quaternary structure, forms oligomers.

The protein localises to the cytoplasm. It is found in the nucleoid. The protein is Transcriptional regulator MraZ of Chlorobium limicola (strain DSM 245 / NBRC 103803 / 6330).